A 143-amino-acid polypeptide reads, in one-letter code: Large ribosomal subunit protein uL13 (143 aa).

It belongs to the universal ribosomal protein uL13 family. As to quaternary structure, part of the 50S ribosomal subunit.

Its function is as follows. This protein is one of the early assembly proteins of the 50S ribosomal subunit, although it is not seen to bind rRNA by itself. It is important during the early stages of 50S assembly. This chain is Large ribosomal subunit protein uL13, found in Coprothermobacter proteolyticus (strain ATCC 35245 / DSM 5265 / OCM 4 / BT).